Here is a 316-residue protein sequence, read N- to C-terminus: Cytochrome c biogenesis protein CcsA (316 aa).

The next 8 membrane-spanning stretches (helical) occupy residues 9–29 (IFVNISFVMFFFVTLLNLINL), 39–61 (FSKNSMTIAFFCTTGFLITRYLQ), 70–90 (LYESLMFLSWGFSLLYLILEV), 94–114 (IGLSHAVLAPGAMLIHAFATL), 143–163 (LISYITLLCGSLLAITLLSLF), 224–244 (TISLGFSLLTIGILSGAVWAN), 257–271 (ETWALVTWLVYAIYL), and 289–309 (SMGFFLVWICFLGVNLLGVGL).

This sequence belongs to the CcmF/CycK/Ccl1/NrfE/CcsA family. May interact with Ccs1.

It is found in the plastid. Its subcellular location is the chloroplast thylakoid membrane. Functionally, required during biogenesis of c-type cytochromes (cytochrome c6 and cytochrome f) at the step of heme attachment. In Adiantum capillus-veneris (Maidenhair fern), this protein is Cytochrome c biogenesis protein CcsA.